The sequence spans 89 residues: Small ribosomal subunit protein uS17 (89 aa).

This sequence belongs to the universal ribosomal protein uS17 family. In terms of assembly, part of the 30S ribosomal subunit.

One of the primary rRNA binding proteins, it binds specifically to the 5'-end of 16S ribosomal RNA. In Lactiplantibacillus plantarum (strain ATCC BAA-793 / NCIMB 8826 / WCFS1) (Lactobacillus plantarum), this protein is Small ribosomal subunit protein uS17.